Consider the following 309-residue polypeptide: MSEINISAVAVKELREKTGAGMMDCKKALIETSGNFEEAIDFLRKKGLAAAAKKAGRIASEGLTAAKVDGLTGVVIEVNSETDFVARNEQFQDLVKEIANLAVIAKTIDTLKTFKMQSGKSVEEEVIENIATIGENLTLRRMDVLEISEGAIGSYVHNEVVPNLGKISVLVGLVSNAKDKAKLEALAKQIAVHVAGNNPQSIDDSSLDQALVERERKVFFEKSKEEGKPDNIIAKMVEGRIRKFFSEVVLLQQNFLFEPKLTVAEVIKNAEKELGAEIKIAKFIRYELGEGIEHEEKNFADEVAAITQG.

Positions 82–85 (TDFV) are involved in Mg(2+) ion dislocation from EF-Tu.

This sequence belongs to the EF-Ts family.

It localises to the cytoplasm. Associates with the EF-Tu.GDP complex and induces the exchange of GDP to GTP. It remains bound to the aminoacyl-tRNA.EF-Tu.GTP complex up to the GTP hydrolysis stage on the ribosome. This is Elongation factor Ts from Rickettsia rickettsii (strain Iowa).